The following is a 468-amino-acid chain: Cysteine--tRNA ligase (468 aa).

C27 contributes to the Zn(2+) binding site. The short motif at 29–39 (PTVYNYFHIGN) is the 'HIGH' region element. Zn(2+) contacts are provided by C207, H232, and E236. Residues 264 to 268 (KMAKS) carry the 'KMSKS' region motif. Position 267 (K267) interacts with ATP.

This sequence belongs to the class-I aminoacyl-tRNA synthetase family. As to quaternary structure, monomer. Requires Zn(2+) as cofactor.

The protein localises to the cytoplasm. It catalyses the reaction tRNA(Cys) + L-cysteine + ATP = L-cysteinyl-tRNA(Cys) + AMP + diphosphate. The sequence is that of Cysteine--tRNA ligase from Acetivibrio thermocellus (strain ATCC 27405 / DSM 1237 / JCM 9322 / NBRC 103400 / NCIMB 10682 / NRRL B-4536 / VPI 7372) (Clostridium thermocellum).